Reading from the N-terminus, the 681-residue chain is Pescadillo homolog (681 aa).

A BRCT domain is found at 350–469; sequence TAGALFAPFT…KLLRPDLYAP (120 aa). The segment at 489–681 is disordered; that stretch reads DPRASLAEQE…RRKLEKGAEK (193 aa). Residues 491 to 527 adopt a coiled-coil conformation; that stretch reads RASLAEQEEEGEAEIAAEEEEEDSDEEMEEATDGKKV. Acidic residues predominate over residues 496-521; sequence EQEEEGEAEIAAEEEEEDSDEEMEEA. Positions 522–533 are enriched in basic and acidic residues; it reads TDGKKVDAKAED. Composition is skewed to acidic residues over residues 534–546 and 554–586; these read SAEE…DDSV and GTDD…DEEE. A coiled-coil region spans residues 574-681; the sequence is EEEAASESED…RRKLEKGAEK (108 aa). Basic and acidic residues predominate over residues 587–597; sequence SARTQHQKELE. A compositionally biased stretch (basic residues) spans 617 to 629; the sequence is KKSSQAKKVASKK. Basic and acidic residues predominate over residues 630–640; it reads RKEEEELERQK.

This sequence belongs to the pescadillo family. In terms of assembly, component of the NOP7 complex, composed of erb1, nop7 and ytm1. The complex is held together by erb1, which interacts with nop7 via its N-terminal domain and with ytm1 via a high-affinity interaction between the seven-bladed beta-propeller domains of the 2 proteins. The NOP7 complex associates with the 66S pre-ribosome.

The protein localises to the nucleus. Its subcellular location is the nucleolus. The protein resides in the nucleoplasm. Functionally, component of the NOP7 complex, which is required for maturation of the 25S and 5.8S ribosomal RNAs and formation of the 60S ribosome. This Aspergillus oryzae (strain ATCC 42149 / RIB 40) (Yellow koji mold) protein is Pescadillo homolog (nop7).